We begin with the raw amino-acid sequence, 91 residues long: Uteroglobin (91 aa).

An N-terminal signal peptide occupies residues 1–21 (MKLTIAIVLVTLTLFCRPAST).

This sequence belongs to the secretoglobin family. Antiparallel homodimer; disulfide-linked. Interaction with LMBR1L is controversial.

It localises to the secreted. In terms of biological role, binds phosphatidylcholine, phosphatidylinositol, polychlorinated biphenyls (PCB) and weakly progesterone, potent inhibitor of phospholipase A2. The chain is Uteroglobin (SCGB1A1) from Bos taurus (Bovine).